We begin with the raw amino-acid sequence, 450 residues long: Phosphoglucosamine mutase (450 aa).

S101 acts as the Phosphoserine intermediate in catalysis. Mg(2+)-binding residues include S101, D240, D242, and D244. Phosphoserine is present on S101.

Belongs to the phosphohexose mutase family. Mg(2+) is required as a cofactor. Activated by phosphorylation.

It carries out the reaction alpha-D-glucosamine 1-phosphate = D-glucosamine 6-phosphate. In terms of biological role, catalyzes the conversion of glucosamine-6-phosphate to glucosamine-1-phosphate. The sequence is that of Phosphoglucosamine mutase from Streptococcus gordonii (strain Challis / ATCC 35105 / BCRC 15272 / CH1 / DL1 / V288).